Consider the following 62-residue polypeptide: DNA-directed RNA polymerase subunit Rpo10 (62 aa).

Positions 6, 9, 43, and 44 each coordinate Zn(2+).

The protein belongs to the archaeal Rpo10/eukaryotic RPB10 RNA polymerase subunit family. As to quaternary structure, part of the RNA polymerase complex. The cofactor is Zn(2+).

The protein resides in the cytoplasm. The enzyme catalyses RNA(n) + a ribonucleoside 5'-triphosphate = RNA(n+1) + diphosphate. Its function is as follows. DNA-dependent RNA polymerase (RNAP) catalyzes the transcription of DNA into RNA using the four ribonucleoside triphosphates as substrates. This Methanosphaerula palustris (strain ATCC BAA-1556 / DSM 19958 / E1-9c) protein is DNA-directed RNA polymerase subunit Rpo10.